The primary structure comprises 476 residues: Phosphomethylpyrimidine synthase (476 aa).

A disordered region spans residues 1–27 (MSTQLQHARDGTVTDAMRRVADREGRD). Positions 7 to 27 (HARDGTVTDAMRRVADREGRD) are enriched in basic and acidic residues. Residues N67, M96, Y125, H160, 180–182 (SRG), 221–224 (DGLR), and E260 each bind substrate. H264 contacts Zn(2+). Y287 contributes to the substrate binding site. H328 provides a ligand contact to Zn(2+). [4Fe-4S] cluster-binding residues include C408, C411, and C416. Residues 425 to 476 (RDAGDDADDMTELTTETDLSESAAAEVNRPPTGTHDAPAAEQAPSPGDDDDD) form a disordered region. The segment covering 436-447 (ELTTETDLSESA) has biased composition (low complexity).

The protein belongs to the ThiC family. It depends on [4Fe-4S] cluster as a cofactor.

The enzyme catalyses 5-amino-1-(5-phospho-beta-D-ribosyl)imidazole + S-adenosyl-L-methionine = 4-amino-2-methyl-5-(phosphooxymethyl)pyrimidine + CO + 5'-deoxyadenosine + formate + L-methionine + 3 H(+). The protein operates within cofactor biosynthesis; thiamine diphosphate biosynthesis. Catalyzes the synthesis of the hydroxymethylpyrimidine phosphate (HMP-P) moiety of thiamine from aminoimidazole ribotide (AIR) in a radical S-adenosyl-L-methionine (SAM)-dependent reaction. The chain is Phosphomethylpyrimidine synthase from Halobacterium salinarum (strain ATCC 29341 / DSM 671 / R1).